Reading from the N-terminus, the 475-residue chain is Ribulose bisphosphate carboxylase large chain (475 aa).

Residues 1–2 (MS) constitute a propeptide that is removed on maturation. Residue Pro3 is modified to N-acetylproline. Position 14 is an N6,N6,N6-trimethyllysine (Lys14). Residues Asn123 and Thr173 each coordinate substrate. The active-site Proton acceptor is Lys175. Lys177 is a substrate binding site. 3 residues coordinate Mg(2+): Lys201, Asp203, and Glu204. Position 201 is an N6-carboxylysine (Lys201). His294 serves as the catalytic Proton acceptor. 3 residues coordinate substrate: Arg295, His327, and Ser379.

This sequence belongs to the RuBisCO large chain family. Type I subfamily. Heterohexadecamer of 8 large chains and 8 small chains; disulfide-linked. The disulfide link is formed within the large subunit homodimers. Mg(2+) is required as a cofactor. In terms of processing, the disulfide bond which can form in the large chain dimeric partners within the hexadecamer appears to be associated with oxidative stress and protein turnover.

It is found in the plastid. Its subcellular location is the chloroplast. It carries out the reaction 2 (2R)-3-phosphoglycerate + 2 H(+) = D-ribulose 1,5-bisphosphate + CO2 + H2O. The enzyme catalyses D-ribulose 1,5-bisphosphate + O2 = 2-phosphoglycolate + (2R)-3-phosphoglycerate + 2 H(+). In terms of biological role, ruBisCO catalyzes two reactions: the carboxylation of D-ribulose 1,5-bisphosphate, the primary event in carbon dioxide fixation, as well as the oxidative fragmentation of the pentose substrate in the photorespiration process. Both reactions occur simultaneously and in competition at the same active site. In Cerastium glomeratum (Sticky chickweed), this protein is Ribulose bisphosphate carboxylase large chain.